Here is a 206-residue protein sequence, read N- to C-terminus: Pyridoxine/pyridoxamine 5'-phosphate oxidase (206 aa).

Residues 54–59 (RVVLLK), 69–70 (YT), Arg-75, Lys-76, and Gln-98 each bind FMN. Lys-59 lines the substrate pocket. Tyr-116, Arg-120, and Ser-124 together coordinate substrate. Residues 133 to 134 (QS) and Trp-178 each bind FMN. 184–186 (RLH) contributes to the substrate binding site. Arg-188 is a binding site for FMN.

The protein belongs to the pyridoxamine 5'-phosphate oxidase family. Homodimer. It depends on FMN as a cofactor.

The enzyme catalyses pyridoxamine 5'-phosphate + O2 + H2O = pyridoxal 5'-phosphate + H2O2 + NH4(+). It catalyses the reaction pyridoxine 5'-phosphate + O2 = pyridoxal 5'-phosphate + H2O2. The protein operates within cofactor metabolism; pyridoxal 5'-phosphate salvage; pyridoxal 5'-phosphate from pyridoxamine 5'-phosphate: step 1/1. It participates in cofactor metabolism; pyridoxal 5'-phosphate salvage; pyridoxal 5'-phosphate from pyridoxine 5'-phosphate: step 1/1. In terms of biological role, catalyzes the oxidation of either pyridoxine 5'-phosphate (PNP) or pyridoxamine 5'-phosphate (PMP) into pyridoxal 5'-phosphate (PLP). In Anaplasma phagocytophilum (strain HZ), this protein is Pyridoxine/pyridoxamine 5'-phosphate oxidase.